The chain runs to 222 residues: Ribosomal RNA small subunit methyltransferase G (222 aa).

S-adenosyl-L-methionine-binding positions include glycine 80, leucine 85, 131 to 132, and arginine 148; that span reads VE.

Belongs to the methyltransferase superfamily. RNA methyltransferase RsmG family.

The protein resides in the cytoplasm. The catalysed reaction is guanosine(527) in 16S rRNA + S-adenosyl-L-methionine = N(7)-methylguanosine(527) in 16S rRNA + S-adenosyl-L-homocysteine. Its function is as follows. Specifically methylates the N7 position of guanine in position 527 of 16S rRNA. In Polynucleobacter asymbioticus (strain DSM 18221 / CIP 109841 / QLW-P1DMWA-1) (Polynucleobacter necessarius subsp. asymbioticus), this protein is Ribosomal RNA small subunit methyltransferase G.